We begin with the raw amino-acid sequence, 208 residues long: Holliday junction branch migration complex subunit RuvA (208 aa).

The domain I stretch occupies residues 1-64 (MIGKLKGIVD…EDMIRLYGFR (64 aa)). A domain II region spans residues 65-143 (VDAEREWFRL…AFAPIDPALI (79 aa)). The flexible linker stretch occupies residues 144–152 (ALTGAVEDR). The domain III stretch occupies residues 153–208 (TAPQPVADAISALVNLGYAQIQASAAIAAALKGLGEEAGTVEAKTLIRLGLRELAR).

The protein belongs to the RuvA family. Homotetramer. Forms an RuvA(8)-RuvB(12)-Holliday junction (HJ) complex. HJ DNA is sandwiched between 2 RuvA tetramers; dsDNA enters through RuvA and exits via RuvB. An RuvB hexamer assembles on each DNA strand where it exits the tetramer. Each RuvB hexamer is contacted by two RuvA subunits (via domain III) on 2 adjacent RuvB subunits; this complex drives branch migration. In the full resolvosome a probable DNA-RuvA(4)-RuvB(12)-RuvC(2) complex forms which resolves the HJ.

It is found in the cytoplasm. Functionally, the RuvA-RuvB-RuvC complex processes Holliday junction (HJ) DNA during genetic recombination and DNA repair, while the RuvA-RuvB complex plays an important role in the rescue of blocked DNA replication forks via replication fork reversal (RFR). RuvA specifically binds to HJ cruciform DNA, conferring on it an open structure. The RuvB hexamer acts as an ATP-dependent pump, pulling dsDNA into and through the RuvAB complex. HJ branch migration allows RuvC to scan DNA until it finds its consensus sequence, where it cleaves and resolves the cruciform DNA. The polypeptide is Holliday junction branch migration complex subunit RuvA (Methylorubrum extorquens (strain CM4 / NCIMB 13688) (Methylobacterium extorquens)).